The chain runs to 88 residues: Small ribosomal subunit protein bS20 (88 aa).

Positions methionine 1–arginine 25 are disordered. The span at lysine 16 to arginine 25 shows a compositional bias: polar residues.

It belongs to the bacterial ribosomal protein bS20 family.

In terms of biological role, binds directly to 16S ribosomal RNA. This chain is Small ribosomal subunit protein bS20, found in Dichelobacter nodosus (strain VCS1703A).